A 223-amino-acid chain; its full sequence is Probable 3-beta-hydroxysteroid-Delta(8),Delta(7)-isomerase (223 aa).

Transmembrane regions (helical) follow at residues 28–48, 58–78, 115–135, and 175–195; these read IVSI…LLFG, LMCW…YFVF, VEGI…YAIA, and FYYY…PSLI. The EXPERA domain occupies 54–196; the sequence is LDKLLMCWWT…WWVLIPSLIS (143 aa).

It belongs to the EBP family.

It is found in the endoplasmic reticulum membrane. It catalyses the reaction lathosterol = 5alpha-cholest-8-en-3beta-ol. The protein operates within steroid biosynthesis; sterol biosynthesis. Functionally, catalyzes the conversion of Delta(8)-sterols to their corresponding Delta(7)-isomers. In Arabidopsis thaliana (Mouse-ear cress), this protein is Probable 3-beta-hydroxysteroid-Delta(8),Delta(7)-isomerase.